A 417-amino-acid polypeptide reads, in one-letter code: MLAFLILVTVTLASAHHSGEHFEGDKVFRVHVEDENHISLLHELASTRQMDFWKPDSVTQVKPHSTVDFRVKAEDTVAVEDFLGQNGLRYEVLISNLRSMLEAQFDSRVRTTGHSYEKYNNWETIEAWTEQVASENPDLISRSAIGTTFLGNTIYLLKVGKPGSNKPAVFMDCGFHAREWISPAFCQWFVREAVRTYGREIHMTEFLDKLDFYVLPVVNIDGYIYTWTTNRMWRKTRSTRAGSSCTGTDLNRNFDAGWCSIGASNNPCSETYCGSAAESEKESKAVADFIRNHLSSIKAYLTIHSYSQMMLYPYSYDYKLPKNNVELNTLAKGAVKKLASLHGTTYTYGPGASTIYPASGGSDDWAYDQGIKYSFTFELRDKGRYGFVLPESQIQPTCEETMLAIKYVTSYVLEHLY.

Positions 1–16 are cleaved as a signal peptide; that stretch reads MLAFLILVTVTLASAH. The propeptide at 17–110 is activation peptide; that stretch reads HSGEHFEGDK…LEAQFDSRVR (94 aa). The Peptidase M14 domain occupies 118 to 412; it reads KYNNWETIEA…LAIKYVTSYV (295 aa). A disulfide bridge connects residues Cys173 and Cys186. His176 and Glu179 together coordinate Zn(2+). Residues 176 to 179, Arg234, and 251 to 252 each bind substrate; these read HARE and NR. Cystine bridges form between Cys245/Cys268 and Cys259/Cys273. Position 304 (His304) interacts with Zn(2+). Substrate is bound by residues 305 to 306 and Tyr356; that span reads SY. Glu378 serves as the catalytic Proton donor/acceptor.

It belongs to the peptidase M14 family. It depends on Zn(2+) as a cofactor.

The protein resides in the secreted. Its subcellular location is the zymogen granule lumen. The catalysed reaction is Preferential release of a C-terminal lysine or arginine amino acid.. In Bos taurus (Bovine), this protein is Carboxypeptidase B (CPB1).